Consider the following 74-residue polypeptide: Translation initiation factor IF-1 (74 aa).

In terms of domain architecture, S1-like spans 1 to 72 (MSKEDAIEME…NKGRITYRLK (72 aa)).

This sequence belongs to the IF-1 family. As to quaternary structure, component of the 30S ribosomal translation pre-initiation complex which assembles on the 30S ribosome in the order IF-2 and IF-3, IF-1 and N-formylmethionyl-tRNA(fMet); mRNA recruitment can occur at any time during PIC assembly.

The protein localises to the cytoplasm. One of the essential components for the initiation of protein synthesis. Stabilizes the binding of IF-2 and IF-3 on the 30S subunit to which N-formylmethionyl-tRNA(fMet) subsequently binds. Helps modulate mRNA selection, yielding the 30S pre-initiation complex (PIC). Upon addition of the 50S ribosomal subunit IF-1, IF-2 and IF-3 are released leaving the mature 70S translation initiation complex. This Synechococcus sp. (strain JA-2-3B'a(2-13)) (Cyanobacteria bacterium Yellowstone B-Prime) protein is Translation initiation factor IF-1.